Reading from the N-terminus, the 587-residue chain is Synaptotagmin-3 (587 aa).

Over 1–54 (MSGDYEDDLCRRALILVSDLCARVRDADTNDRCQEFNELRIRGYPRGPDADISV) the chain is Vesicular. Positions 10-34 (CRRALILVSDLCARVRDADTNDRCQ) are cysteine motif. The chain crosses the membrane as a helical span at residues 55-75 (SLLSVIVTFCGIVLLGVSLFV). Residues 76–587 (SWKLCWVPWR…KGLSEKENSE (512 aa)) lie on the Cytoplasmic side of the membrane. Residues 183–205 (PSQTSPELPSEGGTGSGLLLLPP) are compositionally biased toward low complexity. Residues 183-258 (PSQTSPELPS…EERPPALPLP (76 aa)) are disordered. Residues 213 to 224 (AQSHQQVTSLAP) are compositionally biased toward polar residues. Over residues 229 to 244 (PALPRPLTQQTLTTQA) the composition is skewed to low complexity. Position 286 is an omega-N-methylarginine (R286). C2 domains are found at residues 296–417 (PCGR…PLWR) and 428–562 (DLGE…EHWH). Positions 327, 333, 385, 386, 387, 390, 393, 459, 465, 519, and 521 each coordinate Ca(2+).

This sequence belongs to the synaptotagmin family. As to quaternary structure, homodimer; disulfide-linked via the cysteine motif. Can also form heterodimers with SYT6, SYT9 and SYT10. The cofactor is Ca(2+).

It is found in the cell membrane. The protein resides in the cytoplasmic vesicle. It localises to the secretory vesicle membrane. In terms of biological role, ca(2+) sensor involved in Ca(2+)-dependent exocytosis of secretory vesicles through Ca(2+) and phospholipid binding to the C2 domain. Ca(2+) induces binding of the C2-domains to phospholipid membranes and to assembled SNARE-complexes; both actions contribute to triggering exocytosis. Plays a role in dendrite formation by melanocytes. This is Synaptotagmin-3 (Syt3) from Mus musculus (Mouse).